We begin with the raw amino-acid sequence, 78 residues long: UPF0270 protein YPTB3725 (78 aa).

The protein belongs to the UPF0270 family.

This is UPF0270 protein YPTB3725 from Yersinia pseudotuberculosis serotype I (strain IP32953).